A 203-amino-acid chain; its full sequence is MTLRSFLILLLSSIVLAGCSSVPESVTSVEWQAHEQRLETIDNFQATGKLGYIGPDQRQSLNFFWKHSSALSQLRLTTLLGQTALKLTITPQGATVETYDDQVLSARDANQLIYRLTGLMMPVDHLPDWLLGLPTDADSFQLSPTNTLQALDKQIGLNDWNIAYQRYGDIEWHEQTLPLPNKLRLSTSDVKINLVITKWNITQ.

Positions 1 to 18 are cleaved as a signal peptide; it reads MTLRSFLILLLSSIVLAG. Residue Cys-19 is the site of N-palmitoyl cysteine attachment. Cys-19 carries the S-diacylglycerol cysteine lipid modification.

Belongs to the LolB family. As to quaternary structure, monomer.

The protein resides in the cell outer membrane. Functionally, plays a critical role in the incorporation of lipoproteins in the outer membrane after they are released by the LolA protein. In Vibrio campbellii (strain ATCC BAA-1116), this protein is Outer-membrane lipoprotein LolB.